Reading from the N-terminus, the 130-residue chain is Small ribosomal subunit protein uS8z/uS8w (130 aa).

It belongs to the universal ribosomal protein uS8 family.

The protein localises to the cytoplasm. In Arabidopsis thaliana (Mouse-ear cress), this protein is Small ribosomal subunit protein uS8z/uS8w (RPS15AA).